The following is a 422-amino-acid chain: UPF0761 membrane protein Paes_1471 (422 aa).

The next 6 helical transmembrane spans lie at 47–67 (LLSI…SPVF), 103–123 (SVPT…ISTI), 143–163 (FTLY…SLVA), 185–205 (LLLL…ILVP), 208–228 (KVKF…FEFS), and 247–267 (GALS…VVAL).

Belongs to the UPF0761 family.

It localises to the cell inner membrane. The chain is UPF0761 membrane protein Paes_1471 from Prosthecochloris aestuarii (strain DSM 271 / SK 413).